Reading from the N-terminus, the 221-residue chain is U1 small nuclear ribonucleoprotein C (221 aa).

The segment at 4-36 adopts a Matrin-type zinc-finger fold; it reads HYCDYCDVFLTHDSVSVRKAHNSGRNHLQNVRE. A disordered region spans residues 80–221; that stretch reads GAGPLSGSSD…PHSRTGYGPR (142 aa). Pro residues predominate over residues 142–158; it reads YSRPPPQGGPYSRPPPD. Residues 178–190 are compositionally biased toward low complexity; that stretch reads PLGYGAPLPGAYP. Residues 191–204 are compositionally biased toward pro residues; that stretch reads SGPPPNMRGPPPPL.

It belongs to the U1 small nuclear ribonucleoprotein C family. As to quaternary structure, U1 snRNP is composed of the 7 core Sm proteins B/B', D1, D2, D3, E, F and G that assemble in a heptameric protein ring on the Sm site of the small nuclear RNA to form the core snRNP, and at least 3 U1 snRNP-specific proteins U1-70K, U1-A and U1-C. U1-C interacts with U1 snRNA and the 5' splice-site region of the pre-mRNA.

It localises to the nucleus. Component of the spliceosomal U1 snRNP, which is essential for recognition of the pre-mRNA 5' splice-site and the subsequent assembly of the spliceosome. U1-C is directly involved in initial 5' splice-site recognition for both constitutive and regulated alternative splicing. The interaction with the 5' splice-site seems to precede base-pairing between the pre-mRNA and the U1 snRNA. Stimulates commitment or early (E) complex formation by stabilizing the base pairing of the 5' end of the U1 snRNA and the 5' splice-site region. The sequence is that of U1 small nuclear ribonucleoprotein C from Mycosarcoma maydis (Corn smut fungus).